Here is a 262-residue protein sequence, read N- to C-terminus: Proenkephalin-A-A (262 aa).

The signal sequence occupies residues 1-24 (MGLEARHCCMFLLVFASLSVEIRA). 3 cysteine pairs are disulfide-bonded: Cys-26/Cys-48, Cys-30/Cys-52, and Cys-33/Cys-65. 5 consecutive propeptides follow at residues 110–131 (MDELYHAEPEEDDAGGEILAKN), 139–177 (EYDSDRDAADLLRELLATSGDPESSIYHDNNSETPGEIN), 190–201 (STDLEDETSGIQ), 211–221 (VGRPEWWEDYQ), and 229–253 (TRFTDSFLPSDEDGESYSKENPDME).

This sequence belongs to the opioid neuropeptide precursor family. Post-translationally, the N-terminal domain contains 6 conserved cysteines thought to be involved in disulfide bonding and/or processing.

The protein localises to the secreted. Its function is as follows. Enkephalin neuropeptides compete with and mimic the effects of opiate drugs. They play a role in a number of physiologic functions, including pain perception and responses to stress. This is Proenkephalin-A-A (penk-a) from Xenopus laevis (African clawed frog).